Here is a 223-residue protein sequence, read N- to C-terminus: N-terminal Xaa-Pro-Lys N-methyltransferase 1 (223 aa).

Methionine 1 is subject to N-acetylmethionine. Threonine 2 is modified (N-acetylthreonine; in N-terminal Xaa-Pro-Lys N-methyltransferase 1, N-terminally processed). S-adenosyl-L-methionine contacts are provided by residues glycine 69, arginine 74, 91–93 (DVT), 119–120 (LQ), and glutamine 135.

It belongs to the methyltransferase superfamily. NTM1 family.

The protein localises to the nucleus. It catalyses the reaction N-terminal L-alanyl-L-prolyl-L-lysyl-[protein] + 3 S-adenosyl-L-methionine = N-terminal N,N,N-trimethyl-L-alanyl-L-prolyl-L-lysyl-[protein] + 3 S-adenosyl-L-homocysteine + 3 H(+). It carries out the reaction N-terminal L-seryl-L-prolyl-L-lysyl-[protein] + 3 S-adenosyl-L-methionine = N-terminal N,N,N-trimethyl-L-seryl-L-prolyl-L-lysyl-[protein] + 3 S-adenosyl-L-homocysteine + 3 H(+). The enzyme catalyses N-terminal L-prolyl-L-prolyl-L-lysyl-[protein] + 2 S-adenosyl-L-methionine = N-terminal N,N-dimethyl-L-prolyl-L-prolyl-L-lysyl-[protein] + 2 S-adenosyl-L-homocysteine + 2 H(+). Its function is as follows. Distributive alpha-N-methyltransferase that methylates the N-terminus of target proteins containing the N-terminal motif [Ala/Gly/Pro/Ser]-Pro-Lys when the initiator Met is cleaved. Specifically catalyzes mono-, di- or tri-methylation of the exposed alpha-amino group of the Ala, Gly or Ser residue in the [Ala/Gly/Ser]-Pro-Lys motif and mono- or di-methylation of Pro in the Pro-Pro-Lys motif. Some of the substrates may be primed by NTMT2-mediated monomethylation. Catalyzes the trimethylation of the N-terminal Gly in CENPA (after removal of Met-1). Responsible for the N-terminal methylation of KLHL31, MYL2, MYL3, RB1, RCC1, RPL23A and SET. Required during mitosis for normal bipolar spindle formation and chromosome segregation via its action on RCC1. The sequence is that of N-terminal Xaa-Pro-Lys N-methyltransferase 1 (NTMT1) from Ailuropoda melanoleuca (Giant panda).